A 357-amino-acid polypeptide reads, in one-letter code: MSKGLPETRTDAAMSELVPEPRPKPAVPMKPIGINPNLLGYIGIDTIIEQMRKKTMKTGFDFNIMVVGQSGLGKSTLVNTLFKSQVSRKASSWNREEKIPKTVEIKAIGHVIEEGGVKMKLTVIDTPGFGDQINNENCWEPIEKYINEQYEKFLKEEVNIARKKRIPDTRVHCCLYFISPTGHSLRPLDLEFMKHLSKVVNIIPVIAKADTMTLEEKSEFKQRVRKELEVNGIEFYPQKEFDEDLEDKTENDKIRESMPFAVVGSDKEYQVNGKRVLGRKTPWGIIEVENLNHCEFALLRDFVIRTHLQDLKEVTHNIHYETYRAKRLNDNGGLPPGEGLLGTVLPPVPATPCPTAE.

Over residues 1–10 (MSKGLPETRT) the composition is skewed to basic and acidic residues. Residues 1–29 (MSKGLPETRTDAAMSELVPEPRPKPAVPM) form a disordered region. A Septin-type G domain is found at 58-330 (TGFDFNIMVV…ETYRAKRLND (273 aa)). The segment at 68–75 (GQSGLGKS) is G1 motif. GTP is bound at residue 68–75 (GQSGLGKS). A Phosphoserine modification is found at serine 91. Residue threonine 102 participates in GTP binding. The G3 motif stretch occupies residues 125–128 (DTPG). The tract at residues 207–210 (AKAD) is G4 motif. GTP-binding positions include 208-216 (KADTMTLEE), glycine 264, and arginine 279.

Belongs to the TRAFAC class TrmE-Era-EngA-EngB-Septin-like GTPase superfamily. Septin GTPase family. In terms of assembly, septins polymerize into heterooligomeric protein complexes that form filaments, and can associate with cellular membranes, actin filaments and microtubules. GTPase activity is required for filament formation. In terms of processing, phosphorylated by PKG on serine residues. Phosphorylated by PKG on Ser-91.

It is found in the cytoplasm. The protein resides in the cytoskeleton. Its subcellular location is the synapse. Functionally, filament-forming cytoskeletal GTPase. May play a role in cytokinesis (Potential). The polypeptide is Neuronal-specific septin-3 (Bos taurus (Bovine)).